Consider the following 379-residue polypeptide: ORC1-type DNA replication protein 2 (379 aa).

ATP-binding positions include 69 to 73 (TGKTT), Tyr211, and Arg223.

The protein belongs to the CDC6/cdc18 family. In terms of assembly, interacts with MCM. In terms of processing, autophosphorylated on a serine. Phosphorylation is inhibited by binding to MCM. Both single-stranded DNA and double-stranded DNA inhibit the phosphorylation reaction.

Functionally, involved in regulation of DNA replication. Dissociates the MCM complex and inhibits the MCM helicase activity, suggesting that it may function as a helicase loader. Binds to both specific and random double-stranded or single-stranded DNA. This chain is ORC1-type DNA replication protein 2 (cdc6-2), found in Methanothermobacter thermautotrophicus (strain ATCC 29096 / DSM 1053 / JCM 10044 / NBRC 100330 / Delta H) (Methanobacterium thermoautotrophicum).